Here is a 408-residue protein sequence, read N- to C-terminus: Imidazolonepropionase (408 aa).

Residues histidine 73 and histidine 75 each coordinate Fe(3+). Residues histidine 73 and histidine 75 each contribute to the Zn(2+) site. Residues arginine 82, tyrosine 145, and histidine 178 each coordinate 4-imidazolone-5-propanoate. Position 145 (tyrosine 145) interacts with N-formimidoyl-L-glutamate. Histidine 243 is a Fe(3+) binding site. Histidine 243 serves as a coordination point for Zn(2+). Glutamine 246 is a binding site for 4-imidazolone-5-propanoate. Fe(3+) is bound at residue aspartate 318. Aspartate 318 lines the Zn(2+) pocket. N-formimidoyl-L-glutamate is bound by residues asparagine 320 and glycine 322. Serine 323 is a binding site for 4-imidazolone-5-propanoate.

This sequence belongs to the metallo-dependent hydrolases superfamily. HutI family. Zn(2+) is required as a cofactor. Fe(3+) serves as cofactor.

It is found in the cytoplasm. The catalysed reaction is 4-imidazolone-5-propanoate + H2O = N-formimidoyl-L-glutamate. It functions in the pathway amino-acid degradation; L-histidine degradation into L-glutamate; N-formimidoyl-L-glutamate from L-histidine: step 3/3. Functionally, catalyzes the hydrolytic cleavage of the carbon-nitrogen bond in imidazolone-5-propanoate to yield N-formimidoyl-L-glutamate. It is the third step in the universal histidine degradation pathway. The protein is Imidazolonepropionase of Shewanella woodyi (strain ATCC 51908 / MS32).